We begin with the raw amino-acid sequence, 602 residues long: Aspartate--tRNA(Asp/Asn) ligase (602 aa).

Glu-170 serves as a coordination point for L-aspartate. Residues 194-197 (QLFK) are aspartate. Arg-216 is a binding site for L-aspartate. ATP contacts are provided by residues 216 to 218 (RDE) and Gln-225. His-448 is an L-aspartate binding site. Glu-482 serves as a coordination point for ATP. Residue Arg-489 coordinates L-aspartate. 534–537 (GWDR) serves as a coordination point for ATP. The tract at residues 559–602 (GGVDPLTDAPAPISAQQRKESGIDAKPEKKSEDKKSEGDTAEAK) is disordered. Residues 575–602 (QRKESGIDAKPEKKSEDKKSEGDTAEAK) show a composition bias toward basic and acidic residues.

The protein belongs to the class-II aminoacyl-tRNA synthetase family. Type 1 subfamily. Homodimer.

The protein localises to the cytoplasm. It carries out the reaction tRNA(Asx) + L-aspartate + ATP = L-aspartyl-tRNA(Asx) + AMP + diphosphate. Functionally, aspartyl-tRNA synthetase with relaxed tRNA specificity since it is able to aspartylate not only its cognate tRNA(Asp) but also tRNA(Asn). Reaction proceeds in two steps: L-aspartate is first activated by ATP to form Asp-AMP and then transferred to the acceptor end of tRNA(Asp/Asn). This Rhodococcus erythropolis (strain PR4 / NBRC 100887) protein is Aspartate--tRNA(Asp/Asn) ligase.